A 254-amino-acid chain; its full sequence is Nickel import ATP-binding protein NikD (254 aa).

The ABC transporter domain maps to 2–241 (PQQIELRNIA…PKHAVTRSLV (240 aa)). 36-43 (GGSGSGKS) contributes to the ATP binding site.

It belongs to the ABC transporter superfamily. Nickel importer (TC 3.A.1.5.3) family. As to quaternary structure, the complex is composed of two ATP-binding proteins (NikD and NikE), two transmembrane proteins (NikB and NikC) and a solute-binding protein (NikA).

It is found in the cell inner membrane. The catalysed reaction is Ni(2+)(out) + ATP + H2O = Ni(2+)(in) + ADP + phosphate + H(+). In terms of biological role, part of the ABC transporter complex NikABCDE involved in nickel import. Responsible for energy coupling to the transport system. The protein is Nickel import ATP-binding protein NikD of Escherichia coli (strain UTI89 / UPEC).